The following is a 456-amino-acid chain: Pantothenate kinase 2, mitochondrial (456 aa).

Residues 16–89 (AGRFGAPMER…TSAGRPRAEG (74 aa)) form a disordered region. Low complexity-rich tracts occupy residues 28–39 (RAAATSAAVGES) and 55–65 (SSAAPSGSGEA). Residues serine 55, serine 56, and serine 75 each carry the phosphoserine modification. The Nuclear export signal motif lies at 154–161 (LELKDLTL). Glutamate 224 (proton acceptor) is an active-site residue. Acetyl-CoA-binding residues include serine 278, serine 281, and arginine 293.

The protein belongs to the type II pantothenate kinase family. As to quaternary structure, homodimer.

It localises to the cytoplasm. Its subcellular location is the cytosol. It carries out the reaction (R)-pantothenate + ATP = (R)-4'-phosphopantothenate + ADP + H(+). It participates in cofactor biosynthesis; coenzyme A biosynthesis; CoA from (R)-pantothenate: step 1/5. Its activity is regulated as follows. Inhibited by acetyl-CoA. Inhibited by calcium hopantenate. Activated by palmitoylcarnitine. Functionally, catalyzes the phosphorylation of pantothenate to generate 4'-phosphopantothenate in the first and rate-determining step of coenzyme A (CoA) synthesis. The protein is Pantothenate kinase 2, mitochondrial (Pank2) of Mus musculus (Mouse).